Here is a 332-residue protein sequence, read N- to C-terminus: 2,3-diketo-L-gulonate reductase (332 aa).

The active-site Proton donor is the His44. NAD(+)-binding positions include 168–174 (ITMVDMS), 224–225 (WK), and 304–306 (GHE).

This sequence belongs to the LDH2/MDH2 oxidoreductase family. DlgD subfamily. Homodimer.

It is found in the cytoplasm. The catalysed reaction is 3-dehydro-L-gulonate + NAD(+) = 2,3-dioxo-L-gulonate + NADH + H(+). It carries out the reaction 3-dehydro-L-gulonate + NADP(+) = 2,3-dioxo-L-gulonate + NADPH + H(+). Its function is as follows. Catalyzes the reduction of 2,3-diketo-L-gulonate in the presence of NADH, to form 3-keto-L-gulonate. The chain is 2,3-diketo-L-gulonate reductase from Mannheimia succiniciproducens (strain KCTC 0769BP / MBEL55E).